Here is a 418-residue protein sequence, read N- to C-terminus: Trans-acting enoyl reductase (418 aa).

The protein belongs to the saccharopine dehydrogenase family. Enoyl reductase subfamily.

In terms of biological role, involved in the reduction of the double bond between C-4 and C-5 during phthiocerol dimycocerosates (DIM A) and glycosylated phenolphthiocerol dimycocerosates (PGL) biosynthesis. The polypeptide is Trans-acting enoyl reductase (Mycobacterium tuberculosis (strain ATCC 25177 / H37Ra)).